The following is an 880-amino-acid chain: MOG interacting and ectopic P-granules protein 1 (880 aa).

The segment covering Met-1–Thr-20 has biased composition (polar residues). Disordered regions lie at residues Met-1 to Asp-37, Asp-82 to Glu-257, and Glu-350 to Pro-370. The segment covering Met-23–Asp-37 has biased composition (basic and acidic residues). Residues Ala-87–Val-105 are compositionally biased toward polar residues. The segment covering Glu-108–Asn-120 has biased composition (acidic residues). Basic and acidic residues-rich tracts occupy residues Ser-154–Ser-170 and Lys-183–Thr-193. The span at Gln-215–Gln-224 shows a compositional bias: acidic residues. 2 stretches are compositionally biased toward basic and acidic residues: residues Gln-235–Pro-252 and Glu-350–Gln-364. 2 consecutive C2H2-type zinc fingers follow at residues Ser-436–His-459 and Phe-465–His-488. The CCHC-type zinc-finger motif lies at Tyr-501–Cys-523. 4 C2H2-type zinc fingers span residues Phe-728 to His-751, Leu-768 to His-791, Gly-809 to His-830, and Tyr-841 to His-864.

Interacts with hda-1, let-418, lin-1, mog-1, mog-4, mog-5, mog-6, pie-1 and unc-98.

Its subcellular location is the nucleus. In terms of biological role, has a broad role in development, specifically in the genetic pathway SynMuvB that negatively regulates specification of the vulval cell fate. Required for fem-3 3'-UTR-mediated repression in the regulation of the sperm/oocyte switch. Acts by regulating the translation of fem-3 mRNA, by binding to its 3'-UTR. The chain is MOG interacting and ectopic P-granules protein 1 from Caenorhabditis briggsae.